Reading from the N-terminus, the 489-residue chain is DNA-dependent metalloprotease SPRTN (489 aa).

Met1 carries the post-translational modification N-acetylmethionine. The SprT-like domain occupies 45-212 (LQALFVQFND…KTCGGTYIKI (168 aa)). His111 contributes to the Zn(2+) binding site. The active site involves Glu112. Positions 115 and 130 each coordinate Zn(2+). Lys230 is subject to N6-acetyllysine. The short motif at 253–261 (FSGKGYVLG) is the SHP-box element. The residue at position 268 (Ser268) is a Phosphoserine. Residue Lys303 forms a Glycyl lysine isopeptide (Lys-Gly) (interchain with G-Cter in SUMO2) linkage. Residues 325–332 (QNVLSNYF) carry the PIP-box motif. Residue Lys341 forms a Glycyl lysine isopeptide (Lys-Gly) (interchain with G-Cter in SUMO2); alternate linkage. Lys341 participates in a covalent cross-link: Glycyl lysine isopeptide (Lys-Gly) (interchain with G-Cter in ubiquitin); alternate. The segment at 357–409 (GNIPKNSVSSSSQRRVSSSKISLRNSSKVTESASVMPSQDVSGSEDTFPNKRP) is disordered. Residue Lys361 forms a Glycyl lysine isopeptide (Lys-Gly) (interchain with G-Cter in SUMO2) linkage. Residues 363–383 (SVSSSSQRRVSSSKISLRNSS) show a composition bias toward low complexity. Phosphoserine; by CHEK1 is present on residues Ser373 and Ser374. Lys376 participates in a covalent cross-link: Glycyl lysine isopeptide (Lys-Gly) (interchain with G-Cter in SUMO2); alternate. Lys376 participates in a covalent cross-link: Glycyl lysine isopeptide (Lys-Gly) (interchain with G-Cter in ubiquitin); alternate. Ser383 is modified (phosphoserine; by CHEK1). Residues 384-403 (KVTESASVMPSQDVSGSEDT) show a composition bias toward polar residues. The Nuclear localization signal signature appears at 402–413 (DTFPNKRPRLED). Residue Lys414 forms a Glycyl lysine isopeptide (Lys-Gly) (interchain with G-Cter in ubiquitin) linkage. Glycyl lysine isopeptide (Lys-Gly) (interchain with G-Cter in SUMO2) cross-links involve residues Lys423 and Lys424. The disordered stretch occupies residues 428–453 (KSSGNDPKYSTTTAQNSSSSSSQSKM). Lys435 is covalently cross-linked (Glycyl lysine isopeptide (Lys-Gly) (interchain with G-Cter in ubiquitin)). Positions 437–451 (STTTAQNSSSSSSQS) are enriched in low complexity. A UBZ4-type zinc finger spans residues 453–480 (MVNCPVCQNEVLESQINEHLDWCLEGDS). Zn(2+)-binding residues include Cys456, Cys459, His471, and Cys475. A Glycyl lysine isopeptide (Lys-Gly) (interchain with G-Cter in SUMO2) cross-link involves residue Lys484.

The protein belongs to the Spartan family. As to quaternary structure, homodimer. Interacts (VIA PIP-box) with PCNA (when ubiquitinated). Interacts (via its SHP-box) with VCP/p97. Interacts with RAD18. Interacts with KCTD13 and POLD3. Requires Zn(2+) as cofactor. In terms of processing, autocatalytically cleaved in response to double-stranded DNA-binding: autocatalytic cleavage takes place in trans and leads to inactivation. Post-translationally, monoubiquitinated; monoubiquitination promotes exclusion from chromatin. Deubiquitinated by VCPIP1: deubiquitination is required for subsequent acetylation and recruitment to chromatin and DNA damage sites. Acetylated following deubiquitination by VCPIP1, leading to recruitment to chromatin and DNA damage sites. In terms of processing, phosphorylation by CHEK1 promotes recruitment to chromatin.

The protein localises to the nucleus. Its subcellular location is the chromosome. Its activity is regulated as follows. DNA-binding activates the protease activity: single-stranded DNA-binding specifically activates ability to cleave covalent DNA-protein cross-links (DPCs). In contrast, double-stranded DNA-binding specifically activates autocatalytic cleavage, and subsequent inactivation. Its function is as follows. DNA-dependent metalloendopeptidase that mediates the proteolytic cleavage of covalent DNA-protein cross-links (DPCs) during DNA synthesis, thereby playing a key role in maintaining genomic integrity. DPCs are highly toxic DNA lesions that interfere with essential chromatin transactions, such as replication and transcription, and which are induced by reactive agents, such as UV light or formaldehyde. Associates with the DNA replication machinery and specifically removes DPCs during DNA synthesis. Catalyzes proteolytic cleavage of the HMCES DNA-protein cross-link following unfolding by the BRIP1/FANCJ helicase. Acts as a pleiotropic protease for DNA-binding proteins cross-linked with DNA, such as TOP1, TOP2A, histones H3 and H4. Mediates degradation of DPCs that are not ubiquitinated, while it is not able to degrade ubiquitinated DPCs. SPRTN activation requires polymerase collision with DPCs followed by helicase bypass of DPCs. Involved in recruitment of VCP/p97 to sites of DNA damage. Also acts as an activator of CHEK1 during normal DNA replication by mediating proteolytic cleavage of CHEK1, thereby promoting CHEK1 removal from chromatin and subsequent activation. Does not activate CHEK1 in response to DNA damage. May also act as a 'reader' of ubiquitinated PCNA: recruited to sites of UV damage and interacts with ubiquitinated PCNA and RAD18, the E3 ubiquitin ligase that monoubiquitinates PCNA. Facilitates chromatin association of RAD18 and is required for efficient PCNA monoubiquitination, promoting a feed-forward loop to enhance PCNA ubiquitination and translesion DNA synthesis. The sequence is that of DNA-dependent metalloprotease SPRTN from Homo sapiens (Human).